The chain runs to 190 residues: Early nodulin-like protein 12 (190 aa).

Positions 1–21 (MGIIVPVLTLVFLLFAKVSHG) are cleaved as a signal peptide. The Phytocyanin domain occupies 26–130 (RVILVGGSVG…GEKITLVVLA (105 aa)). Residue Asn44 is glycosylated (N-linked (GlcNAc...) asparagine). A disulfide bridge connects residues Cys84 and Cys118. Positions 135–164 (GGGSSSGDAPKVSPVSPTAQTPAPAPGPAA) are disordered. Residues 151–164 (PTAQTPAPAPGPAA) show a composition bias toward low complexity. A lipid anchor (GPI-anchor amidated asparagine) is attached at Asn167. The propeptide at 168 to 190 (AAVGLKVASGWFLTAVVVGLAMA) is removed in mature form.

This sequence belongs to the early nodulin-like (ENODL) family. Confined to flowers and siliques. Expressed in female gametophytes.

The protein localises to the cell membrane. In terms of biological role, may act as a carbohydrate transporter. Required, together with ENODL11, ENODL12, ENODL13, ENODL14 and ENODL15, for male-female communication and pollen tube reception and burst at the synergid cell surface of the female gametophyte. The protein is Early nodulin-like protein 12 of Arabidopsis thaliana (Mouse-ear cress).